The chain runs to 45 residues: Photosystem II reaction center protein K (45 aa).

Positions 1–8 are excised as a propeptide; the sequence is METALLLA. A helical membrane pass occupies residues 24–44; that stretch reads LPLIPLFFLLLAFVWQASVGF.

Belongs to the PsbK family. PSII is composed of 1 copy each of membrane proteins PsbA, PsbB, PsbC, PsbD, PsbE, PsbF, PsbH, PsbI, PsbJ, PsbK, PsbL, PsbM, PsbT, PsbX, PsbY, PsbZ, Psb30/Ycf12, peripheral proteins PsbO, CyanoQ (PsbQ), PsbU, PsbV and a large number of cofactors. It forms dimeric complexes.

The protein resides in the cellular thylakoid membrane. Functionally, one of the components of the core complex of photosystem II (PSII). PSII is a light-driven water:plastoquinone oxidoreductase that uses light energy to abstract electrons from H(2)O, generating O(2) and a proton gradient subsequently used for ATP formation. It consists of a core antenna complex that captures photons, and an electron transfer chain that converts photonic excitation into a charge separation. This is Photosystem II reaction center protein K from Microcystis aeruginosa (strain NIES-843 / IAM M-2473).